Here is an 80-residue protein sequence, read N- to C-terminus: Conotoxin Vi6.2 (80 aa).

Positions Met-1–Ala-22 are cleaved as a signal peptide. Positions Asp-23–Arg-47 are excised as a propeptide. 3 disulfide bridges follow: Cys-49-Cys-62, Cys-56-Cys-67, and Cys-61-Cys-77. A 4-hydroxyproline mark is found at Pro-60 and Pro-63.

This sequence belongs to the conotoxin O1 superfamily. Expressed by the venom duct.

The protein resides in the secreted. In terms of biological role, ion channel inhibitor that inhibits the increase in intracellular calcium upon depolarization in DRG neurons. In vivo, both intraperitoneal and intracranial injections into mice induce hyperactivity. The chain is Conotoxin Vi6.2 from Conus virgo (Virgin cone).